The primary structure comprises 192 residues: uncharacterized protein (192 aa).

The segment at 17 to 73 (MLRGSGKKPIQRLAKAPAATASSKTSEWRATTAYGFLPAGGDVRPHSPRYESQGVLS) is disordered. Residues 30–41 (AKAPAATASSKT) are compositionally biased toward low complexity.

This is an uncharacterized protein from Sinorhizobium fredii (strain NBRC 101917 / NGR234).